A 126-amino-acid polypeptide reads, in one-letter code: Histone H2B type 1-D (126 aa).

The span at 1–12 (MPEPTKSAPAPK) shows a compositional bias: low complexity. Residues 1-36 (MPEPTKSAPAPKKGSKKAVTKAQKKDGKKRKRSRKE) are disordered. The residue at position 2 (Pro2) is an N-acetylproline. At Glu3 the chain carries ADP-ribosyl glutamic acid. Lys6 carries the N6-(2-hydroxyisobutyryl)lysine; alternate modification. Position 6 is an N6-(beta-hydroxybutyryl)lysine; alternate (Lys6). Lys6 carries the post-translational modification N6-acetyllysine; alternate. N6-butyryllysine; alternate is present on Lys6. Lys6 bears the N6-crotonyllysine; alternate mark. At Lys6 the chain carries N6-lactoyllysine; alternate. A Glycyl lysine isopeptide (Lys-Gly) (interchain with G-Cter in SUMO2); alternate cross-link involves residue Lys6. Residue Ser7 is modified to ADP-ribosylserine. Lys12 is subject to N6-(beta-hydroxybutyryl)lysine; alternate. An N6-acetyllysine; alternate mark is found at Lys12 and Lys13. An N6-crotonyllysine; alternate mark is found at Lys12 and Lys13. Lys12 bears the N6-lactoyllysine; alternate mark. An N6-(2-hydroxyisobutyryl)lysine; alternate modification is found at Lys13. Phosphoserine; by STK4/MST1 is present on Ser15. N6-acetyllysine; alternate is present on residues Lys16, Lys17, Lys21, and Lys24. Lys16, Lys17, Lys21, and Lys24 each carry N6-crotonyllysine; alternate. N6-lactoyllysine; alternate is present on residues Lys16, Lys17, Lys21, and Lys24. N6-(beta-hydroxybutyryl)lysine; alternate occurs at positions 17 and 21. Position 17 is an N6-glutaryllysine; alternate (Lys17). Residues Lys21 and Lys24 each carry the N6-(2-hydroxyisobutyryl)lysine; alternate modification. Lys21 is modified (N6-butyryllysine; alternate). Lys21 participates in a covalent cross-link: Glycyl lysine isopeptide (Lys-Gly) (interchain with G-Cter in SUMO2); alternate. Lys25 carries the N6-(2-hydroxyisobutyryl)lysine modification. N6-(2-hydroxyisobutyryl)lysine; alternate is present on Lys35. Lys35 is subject to N6-(beta-hydroxybutyryl)lysine; alternate. Lys35 carries the N6-crotonyllysine; alternate modification. Lys35 carries the N6-glutaryllysine; alternate modification. An N6-succinyllysine; alternate modification is found at Lys35. A Glycyl lysine isopeptide (Lys-Gly) (interchain with G-Cter in ubiquitin); alternate cross-link involves residue Lys35. Glu36 bears the PolyADP-ribosyl glutamic acid mark. Phosphoserine; by AMPK is present on Ser37. Lys44, Lys47, and Lys58 each carry N6-(2-hydroxyisobutyryl)lysine; alternate. Lys44 bears the N6-lactoyllysine; alternate mark. 2 positions are modified to N6-glutaryllysine; alternate: Lys44 and Lys47. Lys47 bears the N6-methyllysine; alternate mark. An N6,N6-dimethyllysine; alternate modification is found at Lys58. At Arg80 the chain carries Dimethylated arginine. An N6-(2-hydroxyisobutyryl)lysine; alternate modification is found at Lys86. Lys86 carries the N6-(beta-hydroxybutyryl)lysine; alternate modification. Lys86 carries the post-translational modification N6-acetyllysine; alternate. An N6-lactoyllysine; alternate modification is found at Lys86. N6,N6,N6-trimethyllysine; alternate is present on Lys86. Arg87 and Arg93 each carry omega-N-methylarginine. Lys109 bears the N6-(2-hydroxyisobutyryl)lysine; alternate mark. N6-lactoyllysine; alternate is present on Lys109. The residue at position 109 (Lys109) is an N6-glutaryllysine; alternate. An N6-methyllysine; alternate modification is found at Lys109. Residue Ser113 is glycosylated (O-linked (GlcNAc) serine). Phosphothreonine is present on Thr116. An N6-(2-hydroxyisobutyryl)lysine; alternate mark is found at Lys117 and Lys121. Residues Lys117 and Lys121 each carry the N6-(beta-hydroxybutyryl)lysine; alternate modification. N6-lactoyllysine; alternate is present on residues Lys117 and Lys121. An N6-glutaryllysine; alternate mark is found at Lys117 and Lys121. Lys117 and Lys121 each carry N6-succinyllysine; alternate. Lys117 carries the N6-malonyllysine; alternate modification. Position 117 is an N6-methylated lysine; alternate (Lys117). Lys121 is covalently cross-linked (Glycyl lysine isopeptide (Lys-Gly) (interchain with G-Cter in ubiquitin); alternate).

It belongs to the histone H2B family. As to quaternary structure, the nucleosome is a histone octamer containing two molecules each of H2A, H2B, H3 and H4 assembled in one H3-H4 heterotetramer and two H2A-H2B heterodimers. The octamer wraps approximately 147 bp of DNA. In terms of processing, monoubiquitination at Lys-35 (H2BK34Ub) by the MSL1/MSL2 dimer is required for histone H3 'Lys-4' (H3K4me) and 'Lys-79' (H3K79me) methylation and transcription activation at specific gene loci, such as HOXA9 and MEIS1 loci. Similarly, monoubiquitination at Lys-121 (H2BK120Ub) by the RNF20/40 complex gives a specific tag for epigenetic transcriptional activation and is also prerequisite for histone H3 'Lys-4' and 'Lys-79' methylation. It also functions cooperatively with the FACT dimer to stimulate elongation by RNA polymerase II. H2BK120Ub also acts as a regulator of mRNA splicing: deubiquitination by USP49 is required for efficient cotranscriptional splicing of a large set of exons. Phosphorylation at Ser-37 (H2BS36ph) by AMPK in response to stress promotes transcription. Phosphorylated on Ser-15 (H2BS14ph) by STK4/MST1 during apoptosis; which facilitates apoptotic chromatin condensation. Also phosphorylated on Ser-15 in response to DNA double strand breaks (DSBs), and in correlation with somatic hypermutation and immunoglobulin class-switch recombination. Post-translationally, glcNAcylation at Ser-113 promotes monoubiquitination of Lys-121. It fluctuates in response to extracellular glucose, and associates with transcribed genes. In terms of processing, ADP-ribosylated by PARP1 or PARP2 on Ser-7 (H2BS6ADPr) in response to DNA damage. H2BS6ADPr promotes recruitment of CHD1L. Mono-ADP-ribosylated on Glu-3 (H2BE2ADPr) by PARP3 in response to single-strand breaks. Poly ADP-ribosylation on Glu-36 (H2BE35ADPr) by PARP1 regulates adipogenesis: it inhibits phosphorylation at Ser-37 (H2BS36ph), thereby blocking expression of pro-adipogenetic genes. Crotonylation (Kcr) is specifically present in male germ cells and marks testis-specific genes in post-meiotic cells, including X-linked genes that escape sex chromosome inactivation in haploid cells. Crotonylation marks active promoters and enhancers and confers resistance to transcriptional repressors. It is also associated with post-meiotically activated genes on autosomes. Post-translationally, lactylated in macrophages by EP300/P300 by using lactoyl-CoA directly derived from endogenous or exogenous lactate, leading to stimulates gene transcription.

It localises to the nucleus. The protein resides in the chromosome. Functionally, core component of nucleosome. Nucleosomes wrap and compact DNA into chromatin, limiting DNA accessibility to the cellular machineries which require DNA as a template. Histones thereby play a central role in transcription regulation, DNA repair, DNA replication and chromosomal stability. DNA accessibility is regulated via a complex set of post-translational modifications of histones, also called histone code, and nucleosome remodeling. The chain is Histone H2B type 1-D from Homo sapiens (Human).